Reading from the N-terminus, the 132-residue chain is Small ribosomal subunit protein uS8 (132 aa).

Belongs to the universal ribosomal protein uS8 family. Part of the 30S ribosomal subunit. Contacts proteins S5 and S12.

In terms of biological role, one of the primary rRNA binding proteins, it binds directly to 16S rRNA central domain where it helps coordinate assembly of the platform of the 30S subunit. The chain is Small ribosomal subunit protein uS8 from Rhodococcus erythropolis (strain PR4 / NBRC 100887).